The primary structure comprises 252 residues: Acyl-coenzyme A diphosphatase FITM2 (252 aa).

The Cytoplasmic portion of the chain corresponds to 1 to 25; it reads MAAAVAGSLVDKLVCLWRQPYTRIY. A helical membrane pass occupies residues 26 to 46; it reads LPHLFFCISLVGSVLKNAELV. At 47 to 59 the chain is on the lumenal side; that stretch reads PESYFSSSRNVLN. The helical transmembrane segment at 60 to 80 threads the bilayer; it reads LYFVKVSWGWTIVLLLPFIAY. Over 81–94 the chain is Cytoplasmic; the sequence is SNFYIKSHMFALRR. Residues 95 to 115 form a helical membrane-spanning segment; the sequence is LTSLLVATLVWYICTETFFYI. The Lumenal segment spans residues 116 to 156; it reads EDITGSCYESNTMVVIRGEFDTKAACRKAGFFWDGFDISGH. His156 is an active-site residue. A helical membrane pass occupies residues 157 to 177; that stretch reads SFILSYSSLVIMEEMVPMLHI. Over 178–190 the chain is Cytoplasmic; the sequence is QPAYRNPPLDCLY. A helical transmembrane segment spans residues 191-211; sequence LALNVIVAIWIWMFGCTSVYF. His212 is a catalytic residue. Residues 212–223 lie on the Lumenal side of the membrane; it reads HDIIDKILGTSC. The chain crosses the membrane as a helical span at residues 224–244; the sequence is GILGWYMTYKVWYVKLFSPGL. Topologically, residues 245 to 252 are cytoplasmic; that stretch reads PPQPKQHT.

This sequence belongs to the FIT family. FIT2 subfamily. As to expression, widely expressed.

It localises to the endoplasmic reticulum membrane. The catalysed reaction is an acyl-CoA + H2O = an acyl-4'-phosphopantetheine + adenosine 3',5'-bisphosphate + 2 H(+). Its function is as follows. Fatty acyl-coenzyme A (CoA) diphosphatase that hydrolyzes fatty acyl-CoA to yield acyl-4'-phosphopantetheine and adenosine 3',5'-bisphosphate. Preferentially hydrolyzes unsaturated long-chain acyl-CoA substrates in the endoplasmic reticulum (ER) lumen. This catalytic activity is required for maintaining ER structure and for lipid droplets (LDs) biogenesis, which are lipid storage organelles involved in maintaining lipid and energy homeostasis. Required for lipid droplet accumulation in liver and intestine during embryogenesis. May directly bind to diacylglycerol (DAGs) and triacylglycerol, which is also important for LD biogenesis. May support directional budding of nacent LDs from the ER into the cytosol by reducing DAG levels at sites of LD formation. May play a role in the regulation of cell morphology, ER morphology and cytoskeletal organization. In Danio rerio (Zebrafish), this protein is Acyl-coenzyme A diphosphatase FITM2.